A 119-amino-acid polypeptide reads, in one-letter code: Gas vesicle protein O1 (119 aa).

Residues 1 to 12 show a composition bias toward basic and acidic residues; that stretch reads MADPANDRSERE. Residues 1-48 are disordered; sequence MADPANDRSEREEGGEDDETPPASDGNPSPSANSFTLSNAQTRAREAA. A compositionally biased stretch (polar residues) spans 26-42; sequence GNPSPSANSFTLSNAQT.

This sequence belongs to the gas vesicle GvpO family. Forms homodimers, forms a GvpN1-GvpO1 heterodimer, interacts with GvpC1 (via the latter's C-terminus), GvpF1, GvpI1 and GvpL1, might interact with GvpA1.

The protein resides in the gas vesicle. The protein localises to the cytoplasm. A minor component of the gas vesicle, also found in soluble extracts. May play a role in transcription and/or RNA stability and in GV assembly. Gas vesicles are hollow, gas filled proteinaceous nanostructures found in several microbial planktonic microorganisms. They allow positioning of halobacteria at the optimal depth for growth in the poorly aerated, shallow brine pools of their habitat. Its function is as follows. Expression of a 9.5 kb p-vac DNA fragment containing 2 divergently transcribed regions (gvpD-gvpE-gvpF-gvpG-gvpH-gvpI-gvpJ-gvpK-gvpL-gvpM and gvpA-gvpC-gvpN-gvpO) allows H.volcanii to produce gas vesicles. A minimal gas vesicle can be made in H.volcanii by gvpA1-gvpO1 gvpF1-gvpG1-gvpJ1-gvpK1-gvpL1-gvpM1; lack of enough GvpJ1 prevents formation. The same region restores gas vesicle production in H.halobium without the p-vac locus, but it still has the c-vac locus. The sequence is that of Gas vesicle protein O1 from Halobacterium salinarum (strain ATCC 700922 / JCM 11081 / NRC-1) (Halobacterium halobium).